The chain runs to 292 residues: 2-(5''-triphosphoribosyl)-3'-dephosphocoenzyme-A synthase (292 aa).

It belongs to the CitG/MdcB family.

It catalyses the reaction 3'-dephospho-CoA + ATP = 2'-(5''-triphospho-alpha-D-ribosyl)-3'-dephospho-CoA + adenine. Functionally, catalyzes the formation of 2-(5''-triphosphoribosyl)-3'-dephosphocoenzyme-A, the precursor of the prosthetic group of the holo-acyl carrier protein (gamma chain) of citrate lyase, from ATP and dephospho-CoA. The polypeptide is 2-(5''-triphosphoribosyl)-3'-dephosphocoenzyme-A synthase (Escherichia coli (strain SMS-3-5 / SECEC)).